The following is a 407-amino-acid chain: Multifunctional CCA protein (407 aa).

Residues glycine 8 and arginine 11 each contribute to the ATP site. CTP is bound by residues glycine 8 and arginine 11. Positions 21 and 23 each coordinate Mg(2+). Residues arginine 91, arginine 137, and arginine 140 each coordinate ATP. CTP-binding residues include arginine 91, arginine 137, and arginine 140. Residues 228 to 329 enclose the HD domain; the sequence is TGVHALMALA…VALFDRVDAW (102 aa).

It belongs to the tRNA nucleotidyltransferase/poly(A) polymerase family. Bacterial CCA-adding enzyme type 1 subfamily. As to quaternary structure, monomer. Can also form homodimers and oligomers. The cofactor is Mg(2+). Requires Ni(2+) as cofactor.

The enzyme catalyses a tRNA precursor + 2 CTP + ATP = a tRNA with a 3' CCA end + 3 diphosphate. It carries out the reaction a tRNA with a 3' CCA end + 2 CTP + ATP = a tRNA with a 3' CCACCA end + 3 diphosphate. Functionally, catalyzes the addition and repair of the essential 3'-terminal CCA sequence in tRNAs without using a nucleic acid template. Adds these three nucleotides in the order of C, C, and A to the tRNA nucleotide-73, using CTP and ATP as substrates and producing inorganic pyrophosphate. tRNA 3'-terminal CCA addition is required both for tRNA processing and repair. Also involved in tRNA surveillance by mediating tandem CCA addition to generate a CCACCA at the 3' terminus of unstable tRNAs. While stable tRNAs receive only 3'-terminal CCA, unstable tRNAs are marked with CCACCA and rapidly degraded. This chain is Multifunctional CCA protein, found in Erwinia tasmaniensis (strain DSM 17950 / CFBP 7177 / CIP 109463 / NCPPB 4357 / Et1/99).